The following is an 81-amino-acid chain: uncharacterized protein (81 aa).

Helical transmembrane passes span 10-30 (FFVL…FLLL) and 56-76 (VLYL…AFAI).

Its subcellular location is the host membrane. This is an uncharacterized protein from Acidianus two-tailed virus (ATV).